A 261-amino-acid polypeptide reads, in one-letter code: Zinc import ATP-binding protein ZnuC (261 aa).

The 222-residue stretch at 6 to 227 (IQLNNIHLRF…PEYLKLFGKQ (222 aa)) folds into the ABC transporter domain. ATP is bound at residue 38–45 (GPNGAGKS).

It belongs to the ABC transporter superfamily. Zinc importer (TC 3.A.1.15.5) family. The complex is composed of two ATP-binding proteins (ZnuC), two transmembrane proteins (ZnuB) and a solute-binding protein (ZnuA).

Its subcellular location is the cell inner membrane. It catalyses the reaction Zn(2+)(out) + ATP(in) + H2O(in) = Zn(2+)(in) + ADP(in) + phosphate(in) + H(+)(in). Functionally, part of the ABC transporter complex ZnuABC involved in zinc import. Responsible for energy coupling to the transport system. This chain is Zinc import ATP-binding protein ZnuC, found in Saccharophagus degradans (strain 2-40 / ATCC 43961 / DSM 17024).